Here is a 375-residue protein sequence, read N- to C-terminus: F420-dependent formate dehydrogenase 2 subunit beta (375 aa).

2 4Fe-4S ferredoxin-type domains span residues 268–291 (PEPEKWDEYWSRCIKCYGCRDVCP) and 320–349 (IRLSHMSFSCINCGQCEDVCPVEIPLAKIY). [4Fe-4S] cluster is bound by residues Cys-280, Cys-283, Cys-286, Cys-290, Cys-329, Cys-332, Cys-335, and Cys-339.

This sequence belongs to the FrhB family. Dimer of an alpha (FdhA2) and a beta (FdhB2) subunit. Requires [4Fe-4S] cluster as cofactor. It depends on FAD as a cofactor. Zn(2+) serves as cofactor.

It catalyses the reaction oxidized coenzyme F420-(gamma-L-Glu)(n) + formate + 2 H(+) = reduced coenzyme F420-(gamma-L-Glu)(n) + CO2. Functionally, catalyzes the oxidation of formate to carbon dioxide, with coenzyme F420 as the electron acceptor. In vitro can also use methyl viologen as electron acceptor. The chain is F420-dependent formate dehydrogenase 2 subunit beta from Methanococcus maripaludis (strain DSM 14266 / JCM 13030 / NBRC 101832 / S2 / LL).